The chain runs to 226 residues: Cytidylate kinase (226 aa).

10 to 18 contributes to the ATP binding site; it reads GPAGAGKST.

It belongs to the cytidylate kinase family. Type 1 subfamily.

The protein localises to the cytoplasm. The enzyme catalyses CMP + ATP = CDP + ADP. The catalysed reaction is dCMP + ATP = dCDP + ADP. The chain is Cytidylate kinase from Caldicellulosiruptor saccharolyticus (strain ATCC 43494 / DSM 8903 / Tp8T 6331).